We begin with the raw amino-acid sequence, 415 residues long: Dibenzothiophene monooxygenase (415 aa).

Residues tyrosine 94, 127–132, 157–161, arginine 280, 365–366, and threonine 387 contribute to the FMN site; these read NASSEN, KHFSS, and IG. Residues 129–140 are lid loop; that stretch reads SSENNSHILDWK.

Belongs to the DszC flavin monooxygenase family. As to quaternary structure, homotetramer.

Its subcellular location is the cytoplasm. The enzyme catalyses dibenzothiophene + 2 FMNH2 + 2 O2 = dibenzothiophene 5,5-dioxide + 2 FMN + 2 H2O + 2 H(+). It carries out the reaction dibenzothiophene + FMNH2 + O2 = dibenzothiophene 5-oxide + FMN + H2O + H(+). It catalyses the reaction dibenzothiophene 5-oxide + FMNH2 + O2 = dibenzothiophene 5,5-dioxide + FMN + H2O + H(+). The protein operates within sulfur metabolism; dibenzothiophene degradation. Its activity is regulated as follows. Inhibited at high concentrations of FMN or FAD. Catalyzes the first step of the '4S' desulfurization pathway that removes covalently bound sulfur from dibenzothiophene (DBT) without breaking carbon-carbon bonds. Sulfur dioxygenase which converts DBT to DBT-sulfone (DBTO2 or DBT 5,5-dioxide) probably in a stepwise manner. In addition to FMNH2 can also use FAD (although FAD is less efficient). This Mycolicibacterium goodii (Mycobacterium goodii) protein is Dibenzothiophene monooxygenase.